We begin with the raw amino-acid sequence, 99 residues long: Plastocyanin (99 aa).

The region spanning Ile1–Asn99 is the Plastocyanin-like domain. 4 residues coordinate Cu cation: His37, Cys84, His87, and Met92.

This sequence belongs to the plastocyanin family. Cu(2+) serves as cofactor.

It localises to the plastid. The protein localises to the chloroplast thylakoid membrane. Participates in electron transfer between P700 and the cytochrome b6-f complex in photosystem I. This Capsella bursa-pastoris (Shepherd's purse) protein is Plastocyanin (PETE).